Consider the following 194-residue polypeptide: Fibroblast growth factor 7 (194 aa).

An N-terminal signal peptide occupies residues 1–31 (MRKWILTWILPSLLYRSCFHIICLVGTISLA). Residue Asn-45 is glycosylated (N-linked (GlcNAc...) asparagine).

This sequence belongs to the heparin-binding growth factors family. Interacts with FGFBP1. Interacts with FGFR2. Affinity between fibroblast growth factors (FGFs) and their receptors is increased by heparan sulfate glycosaminoglycans that function as coreceptors.

The protein localises to the secreted. Its function is as follows. Plays an important role in the regulation of embryonic development, cell proliferation and cell differentiation. Required for normal branching morphogenesis. Growth factor active on keratinocytes. Possible major paracrine effector of normal epithelial cell proliferation. The polypeptide is Fibroblast growth factor 7 (FGF7) (Cervus elaphus (Red deer)).